Here is a 364-residue protein sequence, read N- to C-terminus: Growth hormone secretagogue receptor type 1 (364 aa).

The Extracellular segment spans residues 1–40; that stretch reads MWNATPSEEPEPNVTLDLDWDASPGNDSLSDELLPLFPAP. N-linked (GlcNAc...) asparagine glycans are attached at residues Asn13 and Asn26. A helical transmembrane segment spans residues 41-66; that stretch reads LLAGVTATCVALFVVGISGNLLTMLV. Residues 67–72 are Cytoplasmic-facing; the sequence is VSRFRE. The chain crosses the membrane as a helical span at residues 73-96; that stretch reads LRTTTNLYLSSMAFSDLLIFLCMP. Over 97 to 117 the chain is Extracellular; that stretch reads LDLVRLWQYRPWNFGDLLCKL. The cysteines at positions 115 and 197 are disulfide-linked. A helical membrane pass occupies residues 118 to 139; the sequence is FQFVSESCTYATVLTITALSVE. At 140–162 the chain is on the cytoplasmic side; sequence RYFAICFPLRAKVVVTKGRVKLV. The helical transmembrane segment at 163-183 threads the bilayer; sequence ILVIWAVAFCSAGPIFVLVGV. Topologically, residues 184 to 211 are extracellular; that stretch reads EHENGTDPRDTNECRATEFAVRSGLLTV. Asn187 is a glycosylation site (N-linked (GlcNAc...) asparagine). A helical membrane pass occupies residues 212-235; it reads MVWVSSVFFFLPVFCLTVLYSLIG. The Cytoplasmic portion of the chain corresponds to 236–263; sequence RKLWRRRGDAAVGSSLRDQNHKQTVKML. Residues 264-285 traverse the membrane as a helical segment; sequence AVVVFAFILCWLPFHVGRYLFS. At 286–302 the chain is on the extracellular side; sequence KSFEPGSLEIAQISQYC. A helical transmembrane segment spans residues 303 to 326; that stretch reads NLVSFVLFYLSAAINPILYNIMSK. The Cytoplasmic segment spans residues 327-364; it reads KYRVAVFKLLGFESFSQRKLSTLKDESSRAWTKSSINT.

The protein belongs to the G-protein coupled receptor 1 family.

Its subcellular location is the cell membrane. Its function is as follows. Receptor for ghrelin, coupled to G-alpha-11 proteins. Stimulates growth hormone secretion. Also binds other growth hormone releasing peptides (GHRP) (e.g. Met-enkephalin and GHRP-6) as well as non-peptide, low molecular weight secretagogues (e.g. L-692,429, MK-0677, adenosine). This is Growth hormone secretagogue receptor type 1 (Ghsr) from Mus musculus (Mouse).